The following is a 371-amino-acid chain: Opsin, ultraviolet-sensitive (371 aa).

At 1-52 (MSNDSIHWEARYLPAGPPRLLGWNVPAEELIHIPEHWLVYPEPNPSLHYLLA) the chain is on the extracellular side. The N-linked (GlcNAc...) asparagine glycan is linked to Asn-3. The helical transmembrane segment at 53–73 (LLYILFTFLALLGNGLVIWIF) threads the bilayer. Topologically, residues 74-84 (CAAKSLRTPSN) are cytoplasmic. Residues 85 to 105 (MFVVNLAICDFFMMIKTPIFI) traverse the membrane as a helical segment. Topologically, residues 106–121 (YNSFNTGFALGNLGCQ) are extracellular. An intrachain disulfide couples Cys-120 to Cys-197. The helical transmembrane segment at 122–142 (IFAVIGSLTGIGAAITNAAIA) threads the bilayer. Residues 143-161 (YDRYSTIARPLDGKLSRGQ) lie on the Cytoplasmic side of the membrane. Residues 162 to 182 (VILFIVLIWTYTIPWALMPVM) form a helical membrane-spanning segment. Residues 183 to 209 (GVWGRFVPEGFLTSCSFDYLTDTNEIR) are Extracellular-facing. A helical transmembrane segment spans residues 210–230 (IFVATIFTFSYCIPMILIIYY). The Cytoplasmic portion of the chain corresponds to 231–278 (YSQIVSHVVNHEKALREQAKKMNVDSLRSNANTSSQSAEIRIAKAAIT). A helical membrane pass occupies residues 279–299 (ICFLYVLSWTPYGVMSMIGAF). Over 300–302 (GNK) the chain is Extracellular. A helical transmembrane segment spans residues 303–323 (ALLTPGVTMIPACTCKAVACL). Lys-318 is modified (N6-(retinylidene)lysine). At 324-371 (DPYVYAISHPKYRLELQKRLPWLELQEKPISDSTSTTTETVNTPPASS) the chain is on the cytoplasmic side.

It belongs to the G-protein coupled receptor 1 family. Opsin subfamily. Phosphorylated on some or all of the serine and threonine residues present in the C-terminal region. In terms of tissue distribution, expressed in the dorsal region of the retina.

The protein resides in the membrane. Its function is as follows. Visual pigments are the light-absorbing molecules that mediate vision. They consist of an apoprotein, opsin, covalently linked to 11-cis-retinal. In Apis mellifera (Honeybee), this protein is Opsin, ultraviolet-sensitive (UVOP).